The chain runs to 480 residues: Glycogen synthase (480 aa).

Lys-15 provides a ligand contact to ADP-alpha-D-glucose.

The protein belongs to the glycosyltransferase 1 family. Bacterial/plant glycogen synthase subfamily.

It catalyses the reaction [(1-&gt;4)-alpha-D-glucosyl](n) + ADP-alpha-D-glucose = [(1-&gt;4)-alpha-D-glucosyl](n+1) + ADP + H(+). It participates in glycan biosynthesis; glycogen biosynthesis. Synthesizes alpha-1,4-glucan chains using ADP-glucose. The polypeptide is Glycogen synthase (Granulibacter bethesdensis (strain ATCC BAA-1260 / CGDNIH1)).